A 252-amino-acid chain; its full sequence is Indole-3-glycerol phosphate synthase (252 aa).

Belongs to the TrpC family.

It carries out the reaction 1-(2-carboxyphenylamino)-1-deoxy-D-ribulose 5-phosphate + H(+) = (1S,2R)-1-C-(indol-3-yl)glycerol 3-phosphate + CO2 + H2O. Its pathway is amino-acid biosynthesis; L-tryptophan biosynthesis; L-tryptophan from chorismate: step 4/5. The protein is Indole-3-glycerol phosphate synthase of Listeria monocytogenes serotype 4b (strain CLIP80459).